The chain runs to 79 residues: MDGQFEQKKKQKDETYDIEHLIACFSPMIRKKLSNTSYQEREDLEQELKIKMFEKADMLLCQDVPGFWEFILYMVDENS.

Functionally, together with RNA polymerase sigma factor SigO, positively regulates the expression of at least three operons, including oxdC-yvrL, sigO-rsoA and yvrJ. Required for the acid stress-dependent induction of the oxalate decarboxylase oxdC. This Bacillus subtilis (strain 168) protein is Sigma-O factor regulatory protein RsoA (rsoA).